Here is a 392-residue protein sequence, read N- to C-terminus: Pyoverdine export membrane fusion protein PvdR (392 aa).

Positions 1–36 form a signal peptide, tat-type signal; sequence MRRSTHTRRRLLLGGLGLLGLGSLLAWTSLPFGAQP. A coiled-coil region spans residues 109 to 181; it reads IDNLKAQLAE…NASLRSDEAE (73 aa). The segment at 267 to 286 is disordered; sequence PPKPLDQTSQGGGSPASATA.

This sequence belongs to the membrane fusion protein (MFP) (TC 8.A.1) family. Part of the tripartite efflux system PvdRT-OpmQ, which is composed of an inner membrane component with both ATPase and permease domains, PvdT, a periplasmic membrane fusion protein, PvdR, and an outer membrane component, OpmQ. Predicted to be exported by the Tat system. The position of the signal peptide cleavage has not been experimentally proven.

The protein resides in the periplasm. In terms of biological role, part of the tripartite efflux system PvdRT-OpmQ required for the secretion into the extracellular milieu of the siderophore pyoverdine (PVD), which is involved in iron acquisition. This subunit is an adapter protein that stimulates the ATPase activity of PvdT and connects the inner and outer membrane components. The system is responsible for export of newly synthesized PVD after the final steps of biosynthesis have taken place in the periplasm. It is also responsible for recycling of PVD after internalization of ferri-PVD into the periplasm by the outer-membrane receptor FpvA and release of iron from PVD, thus making PVD available for new cycles of iron uptake. Contributes to resistance against ampicillin. The sequence is that of Pyoverdine export membrane fusion protein PvdR from Pseudomonas putida (strain ATCC 47054 / DSM 6125 / CFBP 8728 / NCIMB 11950 / KT2440).